The chain runs to 202 residues: Holliday junction resolvase RecU (202 aa).

Mg(2+)-binding residues include T85, D87, E100, and Q119.

It belongs to the RecU family. Mg(2+) is required as a cofactor.

It is found in the cytoplasm. It catalyses the reaction Endonucleolytic cleavage at a junction such as a reciprocal single-stranded crossover between two homologous DNA duplexes (Holliday junction).. Its function is as follows. Endonuclease that resolves Holliday junction intermediates in genetic recombination. Cleaves mobile four-strand junctions by introducing symmetrical nicks in paired strands. Promotes annealing of linear ssDNA with homologous dsDNA. Required for DNA repair, homologous recombination and chromosome segregation. The sequence is that of Holliday junction resolvase RecU from Streptococcus equi subsp. zooepidemicus (strain H70).